The chain runs to 390 residues: 3,5-dihydroxyphenylacetyl-CoA synthase (390 aa).

Cys173 is an active-site residue.

Belongs to the thiolase-like superfamily. Chalcone/stilbene synthases family.

It carries out the reaction 4 malonyl-CoA + 4 H(+) = (3,5-dihydroxyphenyl)acetyl-CoA + 4 CO2 + 3 CoA + H2O. The protein operates within antibiotic biosynthesis; vancomycin biosynthesis. Involved in the biosynthesis of the nonproteinogenic amino acid monomer (S)-3,5-dihydroxyphenylglycine (Dpg) responsible of the production of vancomycin and teicoplanin antibiotics. Catalyzes the Claisen condensation of four molecules of malonyl-CoA to yield 3,5-dihydroxyphenylacetyl-CoA (DPA-CoA) and three free coenzyme A (CoA). DpgA requires the presence of the dehydratases DpgB and DpgD to facilitate the aromatization of the DPA-S-DgpA or DPA-S-CoA intermediate. This Streptomyces toyocaensis protein is 3,5-dihydroxyphenylacetyl-CoA synthase.